A 276-amino-acid chain; its full sequence is Foldase protein PrsA (276 aa).

A signal peptide spans 1 to 18; that stretch reads MRKWMIVAAVAAVFGLSA. A lipid anchor (N-palmitoyl cysteine) is attached at Cys19. Residue Cys19 is the site of S-diacylglycerol cysteine attachment. Positions 133-223 constitute a PpiC domain; the sequence is KPKIRASHIL…YGYHIIKVTD (91 aa).

Belongs to the PrsA family.

The protein resides in the cell membrane. The enzyme catalyses [protein]-peptidylproline (omega=180) = [protein]-peptidylproline (omega=0). Functionally, plays a major role in protein secretion by helping the post-translocational extracellular folding of several secreted proteins. In Geobacillus sp. (strain WCH70), this protein is Foldase protein PrsA.